Here is a 254-residue protein sequence, read N- to C-terminus: Glutathione S-transferase U12 (254 aa).

Residues 19-23 (KKRKK) carry the Nuclear localization signal motif. The GST N-terminal domain maps to 33–114 (TTVKLIGTWA…YVDESWPSDL (82 aa)). Residues 43-44 (SP), 71-72 (GK), 85-86 (KV), and 98-99 (ES) contribute to the glutathione site. Positions 120–252 (LPSERAFARF…EFIEFAKKKF (133 aa)) constitute a GST C-terminal domain.

Belongs to the GST superfamily. Tau family.

It localises to the nucleus. The catalysed reaction is RX + glutathione = an S-substituted glutathione + a halide anion + H(+). May be involved in the conjugation of reduced glutathione to a wide number of exogenous and endogenous hydrophobic electrophiles and have a detoxification role against certain herbicides. The polypeptide is Glutathione S-transferase U12 (GSTU12) (Arabidopsis thaliana (Mouse-ear cress)).